A 309-amino-acid polypeptide reads, in one-letter code: Probable L,D-transpeptidase ErfK/SrfK (309 aa).

The first 21 residues, 1–21, serve as a signal peptide directing secretion; it reads MRRITPFFPFFVLLVSHFSLA. Residues 96 to 231 form the L,D-TPase catalytic domain; the sequence is EGIVVNVAEM…VPVGTRVQII (136 aa). H191 functions as the Proton donor/acceptor in the catalytic mechanism. Catalysis depends on C207, which acts as the Nucleophile.

Belongs to the YkuD family.

The protein localises to the periplasm. It participates in cell wall biogenesis; peptidoglycan biosynthesis. This chain is Probable L,D-transpeptidase ErfK/SrfK (erfK), found in Salmonella typhimurium (strain LT2 / SGSC1412 / ATCC 700720).